The primary structure comprises 557 residues: Venom carboxylesterase-6 (557 aa).

Residues 1-21 (MYMLKLSYILLFLGFVKFSWQ) form the signal peptide. The cysteines at positions 88 and 108 are disulfide-linked. Asn-145 carries an N-linked (GlcNAc...) asparagine glycan. Ser-212 serves as the catalytic Acyl-ester intermediate. Cys-264 and Cys-275 are joined by a disulfide. The active-site Charge relay system is Glu-341. Asn-374 carries N-linked (GlcNAc...) asparagine glycosylation. The Charge relay system role is filled by His-464. Asn-478, Asn-528, and Asn-542 each carry an N-linked (GlcNAc...) asparagine glycan.

Belongs to the type-B carboxylesterase/lipase family. Expressed by the venom gland.

The protein localises to the secreted. The catalysed reaction is a carboxylic ester + H2O = an alcohol + a carboxylate + H(+). The sequence is that of Venom carboxylesterase-6 from Apis mellifera (Honeybee).